A 210-amino-acid chain; its full sequence is MIHGLLGRKIGMMQYFTAQGMAIPVTVIAAGPCIVTQIRTPERDGYSAVQLGYEEVEPRKLTKPQQGHLKASGGKMLRYLREFSADDPQAHTPGEVVTVELFRPGQKVDISGTSKGRGFAGVVKRHGFRGGPKTHGQSDRHRAPGSIGAGTTPGRVWKGQRMAGRMGGTRVTIQNLEVVEVLPEQNLLLVKGSVPGARNGLLQIRKAVKG.

Residues histidine 126–threonine 152 are disordered.

The protein belongs to the universal ribosomal protein uL3 family. Part of the 50S ribosomal subunit. Forms a cluster with proteins L14 and L19.

In terms of biological role, one of the primary rRNA binding proteins, it binds directly near the 3'-end of the 23S rRNA, where it nucleates assembly of the 50S subunit. The sequence is that of Large ribosomal subunit protein uL3 from Chloroflexus aurantiacus (strain ATCC 29366 / DSM 635 / J-10-fl).